Reading from the N-terminus, the 345-residue chain is Holliday junction branch migration complex subunit RuvB (345 aa).

Residues 1–182 (MQRLVEVESV…FGMHFRMQFY (182 aa)) are large ATPase domain (RuvB-L). Residues L21, R22, G63, K66, T67, T68, 129 to 131 (EDY), R172, Y182, and R219 each bind ATP. T67 is a binding site for Mg(2+). Residues 183-253 (TEIELAKIIQ…RCKYALDELG (71 aa)) are small ATPAse domain (RuvB-S). Positions 256 to 345 (ESGFDEMDIN…EDDLTQGKLF (90 aa)) are head domain (RuvB-H). Residues R310 and R315 each contribute to the DNA site.

Belongs to the RuvB family. As to quaternary structure, homohexamer. Forms an RuvA(8)-RuvB(12)-Holliday junction (HJ) complex. HJ DNA is sandwiched between 2 RuvA tetramers; dsDNA enters through RuvA and exits via RuvB. An RuvB hexamer assembles on each DNA strand where it exits the tetramer. Each RuvB hexamer is contacted by two RuvA subunits (via domain III) on 2 adjacent RuvB subunits; this complex drives branch migration. In the full resolvosome a probable DNA-RuvA(4)-RuvB(12)-RuvC(2) complex forms which resolves the HJ.

The protein resides in the cytoplasm. It catalyses the reaction ATP + H2O = ADP + phosphate + H(+). Its function is as follows. The RuvA-RuvB-RuvC complex processes Holliday junction (HJ) DNA during genetic recombination and DNA repair, while the RuvA-RuvB complex plays an important role in the rescue of blocked DNA replication forks via replication fork reversal (RFR). RuvA specifically binds to HJ cruciform DNA, conferring on it an open structure. The RuvB hexamer acts as an ATP-dependent pump, pulling dsDNA into and through the RuvAB complex. RuvB forms 2 homohexamers on either side of HJ DNA bound by 1 or 2 RuvA tetramers; 4 subunits per hexamer contact DNA at a time. Coordinated motions by a converter formed by DNA-disengaged RuvB subunits stimulates ATP hydrolysis and nucleotide exchange. Immobilization of the converter enables RuvB to convert the ATP-contained energy into a lever motion, pulling 2 nucleotides of DNA out of the RuvA tetramer per ATP hydrolyzed, thus driving DNA branch migration. The RuvB motors rotate together with the DNA substrate, which together with the progressing nucleotide cycle form the mechanistic basis for DNA recombination by continuous HJ branch migration. Branch migration allows RuvC to scan DNA until it finds its consensus sequence, where it cleaves and resolves cruciform DNA. This is Holliday junction branch migration complex subunit RuvB from Aliarcobacter butzleri (strain RM4018) (Arcobacter butzleri).